The following is a 172-amino-acid chain: Translationally-controlled tumor protein (172 aa).

Residues 1-172 (MIIYRDLISH…FKDGLEMEKC (172 aa)) enclose the TCTP domain. Phosphoserine is present on residues S46 and S53. S64 is modified (phosphoserine; by PLK1). The segment at 70–172 (VDIVMNHHLQ…FKDGLEMEKC (103 aa)) is required for reduction of TSC22D1 protein stability.

This sequence belongs to the TCTP family. As to quaternary structure, homodimer. Interacts with STEAP3. Interacts with TSC22D1; interaction results in the destabilization of TSC22D1 protein.

The protein resides in the cytoplasm. Involved in calcium binding and microtubule stabilization. Acts as a negative regulator of TSC22D1-mediated apoptosis, via interaction with and destabilization of TSC22D1 protein. The sequence is that of Translationally-controlled tumor protein (Tpt1) from Mus musculus (Mouse).